The sequence spans 785 residues: Penicillin-binding protein 1A (785 aa).

The tract at residues 1–61 is disordered; sequence MPPDDRLTAV…SGPGGPSGPG (61 aa). The span at 33-45 shows a compositional bias: pro residues; it reads SPPPKPPPPPPPG. The span at 46 to 59 shows a compositional bias: gly residues; sequence RGGGGPSGPGGPSG. A helical membrane pass occupies residues 77 to 97; it reads IAVAVMVLLPLITFGMAYMIV. The transglycosylase stretch occupies residues 118–299; that stretch reads GSEIARIVPP…RWNWVLDGMV (182 aa). Glu151 functions as the Proton donor; for transglycosylase activity in the catalytic mechanism. Positions 392–662 are transpeptidase; that stretch reads AVVSIDPRTG…EGVKPLVNKW (271 aa). Ser426 serves as the catalytic Acyl-ester intermediate; for transpeptidase activity. 3 disordered regions span residues 605–626, 690–726, and 738–785; these read SRGH…VQLG, ESFP…QPSV, and GITI…PPPP. Composition is skewed to pro residues over residues 708–721 and 743–758; these read PAAP…PTDP and IGPP…PGAP. The segment covering 759–775 has biased composition (low complexity); the sequence is GAPVGPGAPEVPVAPGA.

Its subcellular location is the cell membrane. It carries out the reaction [GlcNAc-(1-&gt;4)-Mur2Ac(oyl-L-Ala-gamma-D-Glu-L-Lys-D-Ala-D-Ala)](n)-di-trans,octa-cis-undecaprenyl diphosphate + beta-D-GlcNAc-(1-&gt;4)-Mur2Ac(oyl-L-Ala-gamma-D-Glu-L-Lys-D-Ala-D-Ala)-di-trans,octa-cis-undecaprenyl diphosphate = [GlcNAc-(1-&gt;4)-Mur2Ac(oyl-L-Ala-gamma-D-Glu-L-Lys-D-Ala-D-Ala)](n+1)-di-trans,octa-cis-undecaprenyl diphosphate + di-trans,octa-cis-undecaprenyl diphosphate + H(+). The catalysed reaction is Preferential cleavage: (Ac)2-L-Lys-D-Ala-|-D-Ala. Also transpeptidation of peptidyl-alanyl moieties that are N-acyl substituents of D-alanine.. The protein operates within cell wall biogenesis; peptidoglycan biosynthesis. Functionally, cell wall formation. Synthesis of cross-linked peptidoglycan from the lipid intermediates. The enzyme has a penicillin-insensitive transglycosylase N-terminal domain (formation of linear glycan strands) and a penicillin-sensitive transpeptidase C-terminal domain (cross-linking of the peptide subunits). This is Penicillin-binding protein 1A (ponA1) from Mycolicibacterium smegmatis (strain ATCC 700084 / mc(2)155) (Mycobacterium smegmatis).